We begin with the raw amino-acid sequence, 451 residues long: ADP-specific phosphofructokinase (451 aa).

Residues 1-450 (MSVPQDVSIF…FITYVNYLKR (450 aa)) form the ADPK domain. Mg(2+)-binding residues include Glu-261, Glu-291, and Asp-434. Asp-434 acts as the Proton acceptor in catalysis.

Belongs to the carbohydrate kinase PfkC family. Mg(2+) is required as a cofactor.

The protein resides in the cytoplasm. It carries out the reaction beta-D-fructose 6-phosphate + ADP = beta-D-fructose 1,6-bisphosphate + AMP + H(+). It participates in carbohydrate degradation; glycolysis. Catalyzes the phosphorylation of fructose 6-phosphate to fructose 1,6-bisphosphate using ADP as the phosphate donor. This chain is ADP-specific phosphofructokinase, found in Pyrococcus abyssi (strain GE5 / Orsay).